Reading from the N-terminus, the 342-residue chain is Mitogen-activated protein kinase kinase kinase 20 (342 aa).

Residues 3 to 268 (WVRGETIGFG…AEMLLNHSFV (266 aa)) enclose the Protein kinase domain. 9-17 (IGFGTFSTV) serves as a coordination point for ATP. Serine 18 bears the Phosphoserine mark. Threonine 19 is modified (phosphothreonine). Lysine 36 is a binding site for ATP. A phosphotyrosine mark is found at tyrosine 41 and tyrosine 66. Phosphoserine is present on residues serine 93 and serine 114. Residue aspartate 131 is the Proton acceptor of the active site. Residues 285 to 342 (KDEDKVLMSPKCPFEFDDWDSFTLDSNPSFDSPVERLGSLVSGSIPDWSVGGSWLTVR) are required for MKK3 binding.

Belongs to the protein kinase superfamily. Ser/Thr protein kinase family. As to quaternary structure, interacts with MKK3 and MPK18 via its C-terminal domain. Binds to MKK5. In terms of processing, autophosphorylates; active in phosphorylated state. Dephosphorylated by ABI1. In terms of tissue distribution, expressed in roots, seedlings, leaves, flower buds, flowers and siliques.

The protein resides in the nucleus. It is found in the cytoplasm. It carries out the reaction L-seryl-[protein] + ATP = O-phospho-L-seryl-[protein] + ADP + H(+). The catalysed reaction is L-threonyl-[protein] + ATP = O-phospho-L-threonyl-[protein] + ADP + H(+). Activated through serine, threonine and tyrosine phosphorylation, especially upon abscisic acid (ABA) treatment. Restricted activity by ABI1-mediated dephosphorylation. Its function is as follows. Mitogen-activated protein kinase kinase (MAPKK) that phosphorylates both MKK3 and MPK18 and regulate two separate signaling pathways involved in root microtubule functions. MAPKK which regulates abscisic acid (ABA) responses in a MAPKKK20-MKK5-MPK6 cascade involved in root growth (e.g. root cell division and elongation) and stomatal response, probably via MKK5 activation by protein phosphorylation and subsequent activation of MAPK6 by MKK5. Involved in various abiotic stresses (e.g. osmotic stress, cold and hydrogen peroxide) responses by phosphorylating and thus regulating MPK6 activity, in an ABA-independent manner. The polypeptide is Mitogen-activated protein kinase kinase kinase 20 (Arabidopsis thaliana (Mouse-ear cress)).